The sequence spans 147 residues: UPF0251 protein NT01CX_1491 (147 aa).

Belongs to the UPF0251 family.

The chain is UPF0251 protein NT01CX_1491 from Clostridium novyi (strain NT).